A 718-amino-acid chain; its full sequence is Heat shock 70 kDa protein 7, chloroplastic (718 aa).

The N-terminal 92 residues, 1 to 92 (MASSAAQIHI…IDLGTTNSAV (92 aa)), are a transit peptide targeting the chloroplast. Positions 668–678 (QIGQSLYNQPQ) are enriched in polar residues. The segment at 668–718 (QIGQSLYNQPQPGGADSPPGGEASSSSDTSSSAKGGDNGGDVIDADFTDSN) is disordered.

It belongs to the heat shock protein 70 (TC 1.A.33) family. DnaK subfamily.

It is found in the plastid. The protein localises to the chloroplast stroma. Acts redundantly with HSP70-6 in the thermotolerance of germinating seeds. Plays an important role in the protein precursor import into chloroplasts. Its function is as follows. In cooperation with other chaperones, Hsp70s are key components that facilitate folding of de novo synthesized proteins, assist translocation of precursor proteins into organelles, and are responsible for degradation of damaged protein under stress conditions. The protein is Heat shock 70 kDa protein 7, chloroplastic (HSP70-7) of Arabidopsis thaliana (Mouse-ear cress).